The sequence spans 336 residues: MRILGIETSCDDTGIAIYDTNKGLLINEIYNQRKLNNIYGGIIPELASREHMEAMIVLLNKIFKKKNIYKYVDMIAYTAGPGLIGSLLVGATFACSLGLSLNIPVLPVHHMEAHLLSPMLDYKTIQFPFIGLLVSGKHTQIIGAHKFGEYEILGNCLDDAAGEAFDKTAKLLGLKYPGGLELSKLASKGIKDYFYFPRPMIHHSDLNFSFSGLKTFAAQTIKKSSKSMQEKANIAKAFEDAVIDILLIKTKKALKKQKWKRLVIAGGVSANQKLRKKSEIMVKKNFNGTVFYSSLEFCTDNAAMIAYLGSLRQKEARNSQLEILVKPKWSIDDLCF.

Fe cation-binding residues include H110 and H114. Residues 133–137 (LVSGK), D166, G179, and N271 contribute to the substrate site. D300 provides a ligand contact to Fe cation.

Belongs to the KAE1 / TsaD family. Requires Fe(2+) as cofactor.

It localises to the cytoplasm. The catalysed reaction is L-threonylcarbamoyladenylate + adenosine(37) in tRNA = N(6)-L-threonylcarbamoyladenosine(37) in tRNA + AMP + H(+). In terms of biological role, required for the formation of a threonylcarbamoyl group on adenosine at position 37 (t(6)A37) in tRNAs that read codons beginning with adenine. Is involved in the transfer of the threonylcarbamoyl moiety of threonylcarbamoyl-AMP (TC-AMP) to the N6 group of A37, together with TsaE and TsaB. TsaD likely plays a direct catalytic role in this reaction. In Buchnera aphidicola subsp. Acyrthosiphon pisum (strain 5A), this protein is tRNA N6-adenosine threonylcarbamoyltransferase.